The sequence spans 230 residues: Orotidine 5'-phosphate decarboxylase (230 aa).

Substrate is bound by residues Asp-11, Lys-34, 61-70, Thr-117, Arg-179, Gln-188, Gly-208, and Arg-209; that span reads DLKLHDIPNT. Lys-63 serves as the catalytic Proton donor.

This sequence belongs to the OMP decarboxylase family. Type 1 subfamily. Homodimer.

It carries out the reaction orotidine 5'-phosphate + H(+) = UMP + CO2. It participates in pyrimidine metabolism; UMP biosynthesis via de novo pathway; UMP from orotate: step 2/2. In terms of biological role, catalyzes the decarboxylation of orotidine 5'-monophosphate (OMP) to uridine 5'-monophosphate (UMP). In Streptococcus equi subsp. zooepidemicus (strain H70), this protein is Orotidine 5'-phosphate decarboxylase.